The following is a 312-amino-acid chain: Olfactory receptor 10D3 (312 aa).

Residues 1 to 26 lie on the Extracellular side of the membrane; that stretch reads MEIKNCSVVTEFILLGIPHTEGFETL. Residue Asn5 is glycosylated (N-linked (GlcNAc...) asparagine). The helical transmembrane segment at 27–47 threads the bilayer; the sequence is LFVLFLPFYACTLVGNVSILV. The Cytoplasmic segment spans residues 48–57; the sequence is AVISSTRLHT. The chain crosses the membrane as a helical span at residues 58–78; the sequence is PMYFFLGNLSVFDMGFSSVTC. Residues 79–97 are Extracellular-facing; that stretch reads PKMLFYLMGLSRLISYQDC. Cysteines 97 and 179 form a disulfide. The helical transmembrane segment at 98 to 118 threads the bilayer; sequence VSQLFFFHFLGSIECFLYTVM. Residues 119–139 are Cytoplasmic-facing; sequence AYDRFAAICHPLRYSVIMNSK. The helical transmembrane segment at 140-160 threads the bilayer; the sequence is ICVALAVGTWLLGCFHSSVLT. Topologically, residues 161-197 are extracellular; that stretch reads SLTFTLPYCGPNEVDHFFCDIPAILPLASADTSLAQR. The helical transmembrane segment at 198 to 218 threads the bilayer; that stretch reads VSFTNVGLVSLVCFLLILLSY. The Cytoplasmic portion of the chain corresponds to 219–239; that stretch reads TRITISILSIQSTEGRQRAFS. A helical membrane pass occupies residues 240 to 260; that stretch reads TCSAHLIAILCAYGPIITIYL. The Extracellular segment spans residues 261–266; it reads QPTPNP. A helical membrane pass occupies residues 267–287; sequence MLGTVVQILMNLVGPMLNPLI. At 288-312 the chain is on the cytoplasmic side; it reads YTLRNKEVKIALKKILHGKGSVSEG.

This sequence belongs to the G-protein coupled receptor 1 family.

Its subcellular location is the cell membrane. Its function is as follows. Potential odorant receptor. In Mus musculus (Mouse), this protein is Olfactory receptor 10D3.